The chain runs to 342 residues: 4-hydroxy-2-oxovalerate aldolase (342 aa).

Positions 7–257 (IWITEVALRD…KTGVDLYKMM (251 aa)) constitute a Pyruvate carboxyltransferase domain. 15–16 (RD) is a binding site for substrate. Asp16 is a binding site for Mn(2+). Catalysis depends on His19, which acts as the Proton acceptor. Substrate is bound by residues Ser169 and His196. Mn(2+)-binding residues include His196 and His198. Tyr287 provides a ligand contact to substrate.

This sequence belongs to the 4-hydroxy-2-oxovalerate aldolase family.

It catalyses the reaction (S)-4-hydroxy-2-oxopentanoate = acetaldehyde + pyruvate. This chain is 4-hydroxy-2-oxovalerate aldolase (nbaI), found in Geobacillus thermodenitrificans (strain NG80-2).